Reading from the N-terminus, the 1150-residue chain is BAI1-associated protein 3 (1150 aa).

Positions 22–44 are disordered; the sequence is RRKTEQEPEVTNSQEPPTGAWKP. A C2 1 domain is found at 139 to 298; sequence SSEEHMEAIM…VKSARANGTA (160 aa). Residues aspartate 174 and aspartate 180 each coordinate Ca(2+). The disordered stretch occupies residues 193–214; sequence APQEPSGQKEQRFGFRKGSKRS. Ca(2+) contacts are provided by aspartate 258 and aspartate 260. The 122-residue stretch at 626 to 747 folds into the MHD1 domain; it reads FELYLTLADT…EASLFYTELL (122 aa). One can recognise an MHD2 domain in the interval 851-959; it reads DEAVAPLLKY…CSTRECIEQF (109 aa). The C2 2 domain occupies 973 to 1099; that stretch reads RFGRLTVRCH…GIARPHVGGG (127 aa). Ca(2+)-binding residues include leucine 1003, aspartate 1004, aspartate 1010, aspartate 1068, aspartate 1070, serine 1073, and aspartate 1076.

This sequence belongs to the unc-13 family. Interacts with ADGRB1, this interaction is direct. Interacts with endosomal SNARE proteins VAMP3, VAMP4, STX6 and STX16; this interaction is increased in the presence of calcium. Ca(2+) serves as cofactor. In terms of tissue distribution, prominently expressed in brain structures including hypothalamus, amygdala, stria terminalis and periaqueductal gray (at protein level). Expressed in nonneuronal tissues, including placenta, lung, pancreas, spleen, and testes. Within placenta, expression is restricted to the syncytiotrophoblasts.

It is found in the cytoplasm. It localises to the cytosol. Its subcellular location is the recycling endosome membrane. The protein resides in the late endosome membrane. The protein localises to the golgi apparatus. It is found in the trans-Golgi network membrane. It localises to the cell membrane. Functionally, functions in endosome to Golgi retrograde transport. In response to calcium influx, may interact with SNARE fusion receptors and membrane phospholipids to mediate endosome fusion with the trans-Golgi network. By promoting the recycling of secretory vesicle transmembrane proteins, it indirectly controls dense-core secretory vesicle biogenesis, maturation and their ability to mediate the constitutive and regulated secretion of neurotransmitters and hormones. May regulate behavior and food intake by controlling calcium-stimulated exocytosis of neurotransmitters including NPY and serotonin and hormones like insulin. Proposed to play a role in hypothalamic neuronal firing by modulating gamma-aminobutyric acid (GABA)ergic inhibitory neurotransmission. The protein is BAI1-associated protein 3 of Mus musculus (Mouse).